A 446-amino-acid polypeptide reads, in one-letter code: Probable D-serine dehydratase (446 aa).

Position 116 is an N6-(pyridoxal phosphate)lysine (Lys116).

This sequence belongs to the serine/threonine dehydratase family. DsdA subfamily. Pyridoxal 5'-phosphate serves as cofactor.

The catalysed reaction is D-serine = pyruvate + NH4(+). This Bacillus thuringiensis (strain Al Hakam) protein is Probable D-serine dehydratase.